The chain runs to 501 residues: Lysine--tRNA ligase (501 aa).

Residues glutamate 404 and glutamate 411 each coordinate Mg(2+).

The protein belongs to the class-II aminoacyl-tRNA synthetase family. As to quaternary structure, homodimer. Mg(2+) is required as a cofactor.

The protein resides in the cytoplasm. It catalyses the reaction tRNA(Lys) + L-lysine + ATP = L-lysyl-tRNA(Lys) + AMP + diphosphate. This is Lysine--tRNA ligase from Campylobacter jejuni (strain RM1221).